A 739-amino-acid chain; its full sequence is Phosphoribosylformylglycinamidine synthase subunit PurL (739 aa).

Histidine 54 is an active-site residue. Residues tyrosine 57 and lysine 96 each contribute to the ATP site. Glutamate 98 lines the Mg(2+) pocket. Substrate-binding positions include 99-102 and arginine 121; that span reads SHNH. The active-site Proton acceptor is histidine 100. Aspartate 122 provides a ligand contact to Mg(2+). Substrate is bound at residue glutamine 245. Aspartate 273 contacts Mg(2+). 317-319 contributes to the substrate binding site; that stretch reads ESQ. The ATP site is built by aspartate 500 and glycine 537. Residue asparagine 538 coordinates Mg(2+). Serine 540 contributes to the substrate binding site.

Belongs to the FGAMS family. In terms of assembly, monomer. Part of the FGAM synthase complex composed of 1 PurL, 1 PurQ and 2 PurS subunits.

It is found in the cytoplasm. It catalyses the reaction N(2)-formyl-N(1)-(5-phospho-beta-D-ribosyl)glycinamide + L-glutamine + ATP + H2O = 2-formamido-N(1)-(5-O-phospho-beta-D-ribosyl)acetamidine + L-glutamate + ADP + phosphate + H(+). The protein operates within purine metabolism; IMP biosynthesis via de novo pathway; 5-amino-1-(5-phospho-D-ribosyl)imidazole from N(2)-formyl-N(1)-(5-phospho-D-ribosyl)glycinamide: step 1/2. Part of the phosphoribosylformylglycinamidine synthase complex involved in the purines biosynthetic pathway. Catalyzes the ATP-dependent conversion of formylglycinamide ribonucleotide (FGAR) and glutamine to yield formylglycinamidine ribonucleotide (FGAM) and glutamate. The FGAM synthase complex is composed of three subunits. PurQ produces an ammonia molecule by converting glutamine to glutamate. PurL transfers the ammonia molecule to FGAR to form FGAM in an ATP-dependent manner. PurS interacts with PurQ and PurL and is thought to assist in the transfer of the ammonia molecule from PurQ to PurL. In Bacillus cereus (strain G9842), this protein is Phosphoribosylformylglycinamidine synthase subunit PurL.